Consider the following 95-residue polypeptide: RING finger protein Z (95 aa).

A lipid anchor (N-myristoyl glycine; by host) is attached at Gly-2. Residues 38–74 (CKRCWFATKGLIACSDHYLCLNCLTIMLSDGNFCEVC) form an RING-type; atypical zinc finger. The PTAP/PSAP motif motif lies at 88–91 (PSAP).

Belongs to the arenaviridae Z protein family. As to quaternary structure, interacts with protein NP; this interaction probably directs the encapsidated genome to budding sites. Interacts (via RING domain) with polymerase L; this interaction inhibits viral transcription and replication, Z partially blocks the product exit tunnel for the releasing nascent RNA product. Interacts with the glycoprotein complex; this interaction plays a role in virion budding. Interacts with host eIF4E; this interaction results in eIF4E reduced affinity for its substrate, the 5'-m7 G cap structure. Interacts (via late-budding domain) with host TSG101; this interaction is essential for budding and release of viral particles. Interacts with host RPLP0; this interaction may serve to load ribosome-like particles inside the virion. Interacts with host PML; this interaction induces PML bodies redistribution in the cytoplasm upon viral infection. Myristoylation is required for the role of RING finger protein Z in assembly and budding.

It localises to the virion. The protein localises to the host cytoplasm. It is found in the host perinuclear region. The protein resides in the host cell membrane. Its function is as follows. Plays a crucial role in virion assembly and budding. Expressed late in the virus life cycle, it acts as an inhibitor of viral transcription and RNA synthesis by interacting with the viral polymerase L. Presumably recruits the NP encapsidated genome to cellular membranes at budding sites via direct interaction with NP. Plays critical roles in the final steps of viral release by interacting with host TSG101, a member of the vacuolar protein-sorting pathway and using other cellular host proteins involved in vesicle formation pathway. The budding of the virus progeny occurs after association of protein Z with the viral glycoprotein complex SSP-GP1-GP2 at the cell periphery, step that requires myristoylation of protein Z. Also selectively represses protein production by associating with host eIF4E. In cell-based minigenome assay, has an inhibitory effect on the ribonucleoprotein machinery (vRNP), which is responsible for the replication and transcription of the viral genome. This chain is RING finger protein Z, found in Sooretamys angouya (Paraguayan rice rat).